The chain runs to 310 residues: Mitochondrial citrate transporter E (310 aa).

Solcar repeat units lie at residues 2-95 (STTT…LRQG), 107-199 (QSLG…AKRR), and 208-293 (DGPG…TNKI). The next 6 membrane-spanning stretches (helical) occupy residues 8–28 (FIAGGVAACGAVTVTHSFETV), 72–92 (GSAYIYQVLLNGCRLGFYEPL), 114–133 (LAGAASGIIGAAAGSPFFLV), 178–198 (AMVRTGFGSSVQLPTYFFAKR), 211–228 (GLHLASSTASGFVVCCVM), and 265–286 (IYKGYFAHLARILPHTILTLSL).

Belongs to the mitochondrial carrier (TC 2.A.29) family.

The protein resides in the mitochondrion inner membrane. Functionally, mitochondrial transporter that does not mediate citrate export from mitochondria to cytoplasm. Its exact function has still to be determined. The polypeptide is Mitochondrial citrate transporter E (Aspergillus niger (strain ATCC 1015 / CBS 113.46 / FGSC A1144 / LSHB Ac4 / NCTC 3858a / NRRL 328 / USDA 3528.7)).